Consider the following 1040-residue polypeptide: Multidrug resistance protein MdtB (1040 aa).

12 helical membrane-spanning segments follow: residues 16–36, 342–362, 373–393, 396–416, 440–460, 472–492, 537–557, 865–885, 888–908, 911–931, 968–988, and 1002–1022; these read FILR…AGLV, DVQF…YLFL, IAVP…GFSV, LTLM…IVVI, IGFT…PLLF, FAVT…TLTP, WITL…YIVI, STIW…GVLY, FIHP…ALLA, ISGS…IGIV, ILMT…STGV, and GGLV…YLLF.

This sequence belongs to the resistance-nodulation-cell division (RND) (TC 2.A.6) family. MdtB subfamily. In terms of assembly, part of a tripartite efflux system composed of MdtA, MdtB and MdtC. MdtB forms a heteromultimer with MdtC.

Its subcellular location is the cell inner membrane. This is Multidrug resistance protein MdtB from Musicola paradisiaca (strain Ech703) (Dickeya paradisiaca).